We begin with the raw amino-acid sequence, 549 residues long: Lipase 4 (549 aa).

The signal sequence occupies residues 1-15 (MKLALVLSLIVSVAA). An intrachain disulfide couples Cys75 to Cys112. The Acyl-ester intermediate role is filled by Ser224. The cysteines at positions 283 and 292 are disulfide-linked. The Charge relay system role is filled by Glu356. An N-linked (GlcNAc...) asparagine glycan is attached at Asn366. His464 serves as the catalytic Charge relay system.

This sequence belongs to the type-B carboxylesterase/lipase family.

It carries out the reaction a triacylglycerol + H2O = a diacylglycerol + a fatty acid + H(+). The sequence is that of Lipase 4 (LIP4) from Diutina rugosa (Yeast).